The sequence spans 221 residues: Probable hydrogenase maturation factor HypB (221 aa).

Residues 35 to 196 (AFDFMGAIGS…KRINPDAEVV (162 aa)) form a G-domain region. Ni(2+) is bound by residues C95 and H96. The Zn(2+) site is built by C95, H96, H100, H104, and C127. C127 lines the Ni(2+) pocket.

It belongs to the SIMIBI class G3E GTPase family. HypB/HupM subfamily. Homodimer.

In terms of biological role, involved in the maturation of [NiFe] hydrogenases. Required for nickel insertion into the metal center of the hydrogenase. Exhibits a low intrinsic GTPase activity, which is essential for nickel insertion. The sequence is that of Probable hydrogenase maturation factor HypB from Methanocaldococcus jannaschii (strain ATCC 43067 / DSM 2661 / JAL-1 / JCM 10045 / NBRC 100440) (Methanococcus jannaschii).